Consider the following 545-residue polypeptide: Sterol O-acyltransferase 1 (545 aa).

Position 1 is an N-acetylmethionine (methionine 1). The tract at residues 1-24 (MVGEETSLRNRLSRSAENPEQDEA) is disordered. The Cytoplasmic portion of the chain corresponds to 1-133 (MVGEETSLRN…LDELFEVDHI (133 aa)). Serine 7 carries the post-translational modification Phosphoserine. A compositionally biased stretch (polar residues) spans 9–18 (RNRLSRSAEN). Residue histidine 132 participates in cholesterol binding. A helical transmembrane segment spans residues 134 to 155 (RTIYHMFIALLIIFILSTLVVD). Residues 156 to 175 (YIDEGRLVLEFSLLAYAFGQ) are Lumenal-facing. A helical transmembrane segment spans residues 176 to 201 (FPIVIWTWWAMFLSTLAIPYFLFQRW). Over 202–213 (AHGYSKSSHPLI) the chain is Cytoplasmic. The helical transmembrane segment at 214–239 (YSLIHGAFFLVFQLGILGFIPTYVVL) threads the bilayer. Over 240-247 (AYTLPPAS) the chain is Lumenal. A helical transmembrane segment spans residues 248–271 (RFILILEQIRLVMKAHSYVRENVP). Residues 272–314 (RVLSAAKEKSSTVPVPTVNQYLYFLFAPTLIYRDSYPRTPTVR) lie on the Cytoplasmic side of the membrane. A helical transmembrane segment spans residues 315–347 (WGYVAMQFLQVFGCLFYVYYIFERLCAPLFRNI). At 348–364 (KQEPFSARVLVLCVFNS) the chain is on the lumenal side. Residues 365 to 390 (ILPGVLMLFLSFFAFLHCWLNAFAEM) traverse the membrane as a helical segment. Topologically, residues 391 to 438 (LRFGDRMFYKDWWNSTSYSNYYRTWNVVVHDWLYYYVYKDLLWFFSKR) are cytoplasmic. The FYXDWWN motif signature appears at 398 to 404 (FYKDWWN). Asparagine 410, arginine 413, asparagine 416, histidine 420, tyrosine 428, and serine 451 together coordinate an acyl-CoA. Residues 439 to 463 (FRPAAMLAVFALSAVVHEYALAVCL) form a helical membrane-spanning segment. Histidine 455 is an active-site residue. At 464 to 469 (SYFYPV) the chain is on the lumenal side. Residues 470 to 485 (LFVLFMFFGMAFNFIV) form a helical membrane-spanning segment. At 486 to 491 (NDSRKR) the chain is on the cytoplasmic side. Residues 492-523 (PVWNIMVRASLFLGHGVILCFYSQEWYARQRC) traverse the membrane as a helical segment. The cysteines at positions 523 and 541 are disulfide-linked. The Lumenal portion of the chain corresponds to 524–545 (PLKNPTFLDYVRPRTWTCRYVF).

The protein belongs to the membrane-bound acyltransferase family. Sterol o-acyltransferase subfamily. As to quaternary structure, may form homo- or heterodimers. Interacts with UBIAD1.

The protein resides in the endoplasmic reticulum membrane. The enzyme catalyses a sterol + a long-chain fatty acyl-CoA = a long-chain 3-hydroxysterol ester + CoA. It carries out the reaction cholesterol + an acyl-CoA = a cholesterol ester + CoA. The catalysed reaction is cholesterol + (9Z)-octadecenoyl-CoA = cholesteryl (9Z-octadecenoate) + CoA. It catalyses the reaction cholesterol + hexadecanoyl-CoA = cholesteryl hexadecanoate + CoA. The enzyme catalyses octadecanoyl-CoA + cholesterol = cholesteryl octadecanoate + CoA. It carries out the reaction (9Z,12Z)-octadecadienoyl-CoA + cholesterol = cholesteryl (9Z,12Z)-octadecadienoate + CoA. The catalysed reaction is (5Z,8Z,11Z,14Z)-eicosatetraenoyl-CoA + cholesterol = cholesteryl (5Z,8Z,11Z,14Z)-eicosatetraenoate + CoA. It catalyses the reaction (9Z)-hexadecenoyl-CoA + cholesterol = cholesteryl (9Z)-hexadecenoate + CoA. The enzyme catalyses (11Z)-octadecenoyl-CoA + cholesterol = cholesteryl (11Z)-octadecenoate + CoA. It carries out the reaction (7Z)-octadecenoyl-CoA + cholesterol = cholesteryl (7Z)-octadecenoate + CoA. Catalyzes the formation of fatty acid-cholesterol esters, which are less soluble in membranes than cholesterol. Plays a role in lipoprotein assembly and dietary cholesterol absorption. Preferentially utilizes oleoyl-CoA ((9Z)-octadecenoyl-CoA) as substrate: shows a higher activity towards an acyl-CoA substrate with a double bond at the delta-9 position (9Z) than towards saturated acyl-CoA or an unsaturated acyl-CoA with a double bond at the delta-7 (7Z) or delta-11 (11Z) positions. This is Sterol O-acyltransferase 1 from Rattus norvegicus (Rat).